The primary structure comprises 366 residues: Alcohol dehydrogenase (366 aa).

Residues C41, H62, E63, and D167 each contribute to the Zn(2+) site.

The protein belongs to the zinc-containing alcohol dehydrogenase family. As to quaternary structure, homotetramer. Requires Zn(2+) as cofactor.

The catalysed reaction is a primary alcohol + NAD(+) = an aldehyde + NADH + H(+). It catalyses the reaction a secondary alcohol + NAD(+) = a ketone + NADH + H(+). It carries out the reaction (R,R)-butane-2,3-diol + NAD(+) = (R)-acetoin + NADH + H(+). The enzyme catalyses an aldehyde + NAD(+) + H2O = a carboxylate + NADH + 2 H(+). In terms of biological role, multifunctional alcohol dehydrogenase exhibiting NAD(+)-dependent dehydrogenase activities for 2,3-butanediol, ethanol and acetaldehyde, and reductase activities for acetoin (NADH-dependent), and diacetyl and acetaldehyde (independently of whether NADH or NADPH is the reductant). The rate of oxidation of 2,3-butanediol is much higher than for the oxidation of ethanol. Has acetaldehyde dehydrogenase activity leading to acetate formation. May function in the release of excess reducing power in the absence of exogenous hydrogen acceptors such as oxygen. In Cupriavidus necator (strain ATCC 17699 / DSM 428 / KCTC 22496 / NCIMB 10442 / H16 / Stanier 337) (Ralstonia eutropha), this protein is Alcohol dehydrogenase (adh).